A 593-amino-acid chain; its full sequence is NADH-quinone oxidoreductase subunit C/D (593 aa).

The interval 1–184 (MTADNALYIP…DPYSLTLAKQ (184 aa)) is NADH dehydrogenase I subunit C. Residues 208–593 (DYMFLNLGPN…IDFVMADVDR (386 aa)) are NADH dehydrogenase I subunit D.

In the N-terminal section; belongs to the complex I 30 kDa subunit family. It in the C-terminal section; belongs to the complex I 49 kDa subunit family. NDH-1 is composed of 13 different subunits. Subunits NuoB, CD, E, F, and G constitute the peripheral sector of the complex.

It localises to the cell inner membrane. It catalyses the reaction a quinone + NADH + 5 H(+)(in) = a quinol + NAD(+) + 4 H(+)(out). NDH-1 shuttles electrons from NADH, via FMN and iron-sulfur (Fe-S) centers, to quinones in the respiratory chain. The immediate electron acceptor for the enzyme in this species is believed to be ubiquinone. Couples the redox reaction to proton translocation (for every two electrons transferred, four hydrogen ions are translocated across the cytoplasmic membrane), and thus conserves the redox energy in a proton gradient. The protein is NADH-quinone oxidoreductase subunit C/D of Pseudomonas savastanoi pv. phaseolicola (strain 1448A / Race 6) (Pseudomonas syringae pv. phaseolicola (strain 1448A / Race 6)).